The sequence spans 331 residues: Tryptophan--tRNA ligase 1 (331 aa).

Residues 9-11 and 17-18 each bind ATP; these read KPT and GN. The short motif at 10-18 is the 'HIGH' region element; it reads PTGHLTLGN. D137 lines the L-tryptophan pocket. ATP-binding positions include 149 to 151, V188, and 197 to 201; these read GDD and KMGKS. A 'KMSKS' region motif is present at residues 197–201; that stretch reads KMGKS.

This sequence belongs to the class-I aminoacyl-tRNA synthetase family. In terms of assembly, homodimer.

Its subcellular location is the cytoplasm. The catalysed reaction is tRNA(Trp) + L-tryptophan + ATP = L-tryptophyl-tRNA(Trp) + AMP + diphosphate + H(+). In terms of biological role, catalyzes the attachment of tryptophan to tRNA(Trp). This Streptomyces avermitilis (strain ATCC 31267 / DSM 46492 / JCM 5070 / NBRC 14893 / NCIMB 12804 / NRRL 8165 / MA-4680) protein is Tryptophan--tRNA ligase 1.